The following is a 232-amino-acid chain: LexA repressor (232 aa).

Residues 1 to 25 (MSDDSSDSTSGAGSGRGRDSGLTER) are disordered. The span at 16–25 (RGRDSGLTER) shows a compositional bias: basic and acidic residues. The H-T-H motif DNA-binding region spans 46 to 66 (IREIGDAVGLTSTSSVAHQLR). Catalysis depends on for autocatalytic cleavage activity residues Ser156 and Lys193.

It belongs to the peptidase S24 family. Homodimer.

It carries out the reaction Hydrolysis of Ala-|-Gly bond in repressor LexA.. Functionally, represses a number of genes involved in the response to DNA damage (SOS response), including recA and lexA. In the presence of single-stranded DNA, RecA interacts with LexA causing an autocatalytic cleavage which disrupts the DNA-binding part of LexA, leading to derepression of the SOS regulon and eventually DNA repair. The chain is LexA repressor from Mycolicibacterium vanbaalenii (strain DSM 7251 / JCM 13017 / BCRC 16820 / KCTC 9966 / NRRL B-24157 / PYR-1) (Mycobacterium vanbaalenii).